The sequence spans 907 residues: Chloride channel protein 2 (907 aa).

Over 1-93 (MAAATAAAAT…RCHKFLVSRV (93 aa)) the chain is Cytoplasmic. The interval 22–40 (QYEQTLMYGRYTQELGAFA) is essential for channel gating by both voltage and cell volume. Position 26 is a phosphothreonine (Thr26). The interval 42-55 (EEAARIRLGGPEPW) is modulates channel gating by both voltage and cell volume. Transmembrane regions (helical) follow at residues 94-127 (GEDW…AQQW) and 136-161 (ILLQ…TQIL). The Selectivity filter part_1 signature appears at 167–171 (GSGIP). The segment at residues 170–177 (IPEMKTIL) is an intramembrane region (helical). 2 consecutive transmembrane segments (helical) span residues 186-204 (LTLK…ALGS) and 211-229 (EGPF…SKFL). Residues 209–213 (GKEGP) carry the Selectivity filter part_2 motif. Intramembrane regions (helical) lie at residues 245-257 (MLAA…VGCC) and 261-269 (PIGGVLFSI). A run of 5 helical transmembrane segments spans residues 281–301 (YWRG…LAVW), 327–355 (LPAF…VQVM), 364–383 (FLMK…ISTL), 435–455 (ANVF…SALA), and 463–486 (GAFM…MAAW). The Selectivity filter part_3 motif lies at 463–467 (GAFMP). Positions 503-517 (GGYAVVGAAALAGAV) form an intramembrane region, helical. The note=Loop between two helices intramembrane region spans 518–519 (TH). Positions 520-531 (TVSTAVIVFELT) form an intramembrane region, helical. The note=Loop between two helices intramembrane region spans 532–536 (GQIAH). A helical transmembrane segment spans residues 537–554 (ILPVMIAVILANAVAQSL). Residues 555 to 907 (QPSLYDSIIR…TPSDSDDKCQ (353 aa)) are Cytoplasmic-facing. The region spanning 590-648 (MVRDVPHVALSCTFRDLRLALHRTKGRMLALVESPESMILLGSIERSQVVALLGAQLSP) is the CBS 1 domain. Residues 650 to 660 (RRRQHMQKLRK) show a composition bias toward basic residues. A disordered region spans residues 650 to 720 (RRRQHMQKLR…NATSLQEGTT (71 aa)). Positions 664-678 (SPPSDQESPPSSETS) are enriched in low complexity. Residues 696–705 (QTHKPLKPAL) are compositionally biased toward basic residues. The segment covering 710 to 720 (SNATSLQEGTT) has biased composition (polar residues). Ser767 carries the post-translational modification Phosphoserine. Residues 799–859 (IDPAPFQLVE…GSVTAQGVKV (61 aa)) enclose the CBS 2 domain. The Basolateral membrane sorting motif lies at 821-822 (LL). Positions 865 to 907 (SFRDSATSSSDTETTEVHALWGPRSRHGLPREGTPSDSDDKCQ) are disordered.

This sequence belongs to the chloride channel (TC 2.A.49) family. ClC-2/CLCN2 subfamily. Homodimer. Interacts with auxiliary subunit HEPACAM. Phosphorylated. Activated by dephosphorylation. As to expression, ubiquitously expressed. Expressed in neurons and glial cells (at protein level).

Its subcellular location is the cell membrane. It is found in the basolateral cell membrane. The protein localises to the cell projection. It localises to the dendritic spine membrane. The protein resides in the axon. The enzyme catalyses chloride(in) = chloride(out). It catalyses the reaction thiocyanate(in) = thiocyanate(out). The catalysed reaction is bromide(in) = bromide(out). It carries out the reaction nitrate(in) = nitrate(out). The enzyme catalyses iodide(out) = iodide(in). Common gate kinetics are down-regulated by intracellular ATP. Inhibited by AK-42, a derivative of meclofenamate. Inhibited by Cd(2+). Inhibited by Zn(2+) and PKC activation. Inhibited at acidic pH. CCLN2:HEPACAM channel conductance is up-regulated upon hypo-osmolarity. In terms of biological role, voltage-gated and osmosensitive chloride channel. Forms a homodimeric channel where each subunit has its own ion conduction pathway. Conducts double-barreled currents controlled by two types of gates, two fast glutamate gates that control each subunit independently and a slow common gate that opens and shuts off both subunits simultaneously. Displays inward rectification currents activated upon membrane hyperpolarization and extracellular hypotonicity. Contributes to chloride conductance involved in neuron excitability. In hippocampal neurons, generates a significant part of resting membrane conductance and provides an additional chloride efflux pathway to prevent chloride accumulation in dendrites upon GABA receptor activation. In glia, associates with the auxiliary subunit HEPACAM/GlialCAM at astrocytic processes and myelinated fiber tracts where it may regulate transcellular chloride flux buffering extracellular chloride and potassium concentrations. Regulates aldosterone production in adrenal glands. The opening of CLCN2 channels at hyperpolarized membrane potentials in the glomerulosa causes cell membrane depolarization, activation of voltage-gated calcium channels and increased expression of aldosterone synthase, the rate-limiting enzyme for aldosterone biosynthesis. Contributes to chloride conductance in retinal pigment epithelium involved in phagocytosis of shed photoreceptor outer segments and photoreceptor renewal. Conducts chloride currents at the basolateral membrane of epithelial cells with a role in chloride reabsorption rather than secretion. Permeable to small monovalent anions with chloride &gt; thiocyanate &gt; bromide &gt; nitrate &gt; iodide ion selectivity. This chain is Chloride channel protein 2 (Clcn2), found in Rattus norvegicus (Rat).